We begin with the raw amino-acid sequence, 501 residues long: Beta-secretase 1 (501 aa).

The N-terminal stretch at 1–21 is a signal peptide; that stretch reads MAQALPWLLLWMGSGVLPAHG. Positions 22–45 are excised as a propeptide; the sequence is SQPGIRLPLRSGLGGAPLGLRLPR. Topologically, residues 22 to 457 are extracellular; it reads SQPGIRLPLR…PQTDESTLMT (436 aa). A disordered region spans residues 39–58; the sequence is LGLRLPRETDEESEEPGRRG. In terms of domain architecture, Peptidase A1 spans 75–416; that stretch reads YYVEMTLGSP…DRARKRIGFA (342 aa). The active site involves Asp93. Lys126 carries the post-translational modification N6-acetyllysine. Residues Asn153, Asn172, and Asn223 are each glycosylated (N-linked (GlcNAc...) asparagine). 3 disulfide bridges follow: Cys216/Cys420, Cys278/Cys443, and Cys330/Cys380. N6-acetyllysine is present on residues Lys275, Lys279, and Lys285. The active site involves Asp289. Residues Lys299, Lys300, and Lys307 each carry the N6-acetyllysine modification. Residue Asn354 is glycosylated (N-linked (GlcNAc...) asparagine). A helical membrane pass occupies residues 458–478; the sequence is IAYVMAAICALFMLPLCLMVC. 4 S-palmitoyl cysteine lipidation sites follow: Cys474, Cys478, Cys482, and Cys485. The Cytoplasmic portion of the chain corresponds to 479 to 501; the sequence is QWRCLRCLRHQHDDFADDISLLK. Positions 479–501 are interaction with RTN3; the sequence is QWRCLRCLRHQHDDFADDISLLK. Residues 496-500 carry the DXXLL motif; that stretch reads DISLL. At Ser498 the chain carries Phosphoserine. A Glycyl lysine isopeptide (Lys-Gly) (interchain with G-Cter in ubiquitin) cross-link involves residue Lys501.

It belongs to the peptidase A1 family. In terms of assembly, monomer. Interacts (via DXXLL motif) with GGA1, GGA2 and GGA3 (via their VHS domain); the interaction highly increases when BACE1 is phosphorylated at Ser-498. Interacts with RTN1; RTN2; RTN3 and RTN4; the interaction leads to inhibition of amyloid precursor protein processing. Interacts with SNX6. Interacts with PCSK9. Interacts with NAT8 and NAT8B. Interacts with BIN1. Interacts (via extracellular domain) with ADAM10 (via extracellular domain). Interacts with SORL1; this interaction may affect binding with APP and hence reduce APP cleavage. Interacts with NRDC AND NRG1. Palmitoylation mediates lipid raft localization. Post-translationally, acetylated in the endoplasmic reticulum at Lys-126, Lys-275, Lys-279, Lys-285, Lys-299, Lys-300 and Lys-307. Acetylation by NAT8 and NAT8B is transient and deacetylation probably occurs in the Golgi. Acetylation regulates the maturation, the transport to the plasma membrane, the stability and the expression of the protein. In terms of processing, ubiquitinated at Lys-501, ubiquitination leads to lysosomal degradation. Monoubiquitinated and 'Lys-63'-linked polyubitinated. Deubiquitnated by USP8; inhibits lysosomal degradation. Phosphorylation at Ser-498 is required for interaction with GGA1 and retrograded transport from endosomal compartments to the trans-Golgi network. Non-phosphorylated BACE1 enters a direct recycling route to the cell surface. Post-translationally, N-Glycosylated. Addition of a bisecting N-acetylglucosamine by MGAT3 blocks lysosomal targeting, further degradation and is required for maintaining stability under stress conditions.

The protein localises to the cell membrane. It localises to the golgi apparatus. Its subcellular location is the trans-Golgi network. It is found in the endoplasmic reticulum. The protein resides in the endosome. The protein localises to the cell surface. It localises to the cytoplasmic vesicle membrane. Its subcellular location is the membrane raft. It is found in the lysosome. The protein resides in the late endosome. The protein localises to the early endosome. It localises to the recycling endosome. Its subcellular location is the cell projection. It is found in the axon. The protein resides in the dendrite. The catalysed reaction is Broad endopeptidase specificity. Cleaves Glu-Val-Asn-Leu-|-Asp-Ala-Glu-Phe in the Swedish variant of Alzheimer's amyloid precursor protein.. Inhibited by RTN3 and RTN4. Responsible for the proteolytic processing of the amyloid precursor protein (APP). Cleaves at the N-terminus of the A-beta peptide sequence, between residues 671 and 672 of APP, leads to the generation and extracellular release of beta-cleaved soluble APP, and a corresponding cell-associated C-terminal fragment which is later released by gamma-secretase. Cleaves CHL1. The polypeptide is Beta-secretase 1 (BACE1) (Bos taurus (Bovine)).